We begin with the raw amino-acid sequence, 351 residues long: Transaldolase (351 aa).

Catalysis depends on K138, which acts as the Schiff-base intermediate with substrate.

The protein belongs to the transaldolase family. Type 2 subfamily.

It localises to the cytoplasm. It carries out the reaction D-sedoheptulose 7-phosphate + D-glyceraldehyde 3-phosphate = D-erythrose 4-phosphate + beta-D-fructose 6-phosphate. It functions in the pathway carbohydrate degradation; pentose phosphate pathway; D-glyceraldehyde 3-phosphate and beta-D-fructose 6-phosphate from D-ribose 5-phosphate and D-xylulose 5-phosphate (non-oxidative stage): step 2/3. Functionally, transaldolase is important for the balance of metabolites in the pentose-phosphate pathway. The protein is Transaldolase of Neisseria gonorrhoeae (strain ATCC 700825 / FA 1090).